The primary structure comprises 229 residues: Adenylate kinase (229 aa).

10 to 15 contributes to the ATP binding site; the sequence is GSGKGT. The NMP stretch occupies residues 30–59; that stretch reads ESGVIFREHISKGTELGKQAKSYIDKGELV. AMP-binding positions include Ser31, Arg36, 57–59, 84–87, and Gln91; these read ELV and GFPR. Residues 125–164 are LID; sequence GRRICKTNNNHPNNVSIDSIKPDGNNCRVCHGELIVRTDD. Residue Arg126 coordinates ATP. AMP-binding residues include Arg161 and Arg173. Asn209 provides a ligand contact to ATP.

Belongs to the adenylate kinase family. As to quaternary structure, monomer.

Its subcellular location is the cytoplasm. The catalysed reaction is AMP + ATP = 2 ADP. It functions in the pathway purine metabolism; AMP biosynthesis via salvage pathway; AMP from ADP: step 1/1. Catalyzes the reversible transfer of the terminal phosphate group between ATP and AMP. Plays an important role in cellular energy homeostasis and in adenine nucleotide metabolism. The sequence is that of Adenylate kinase from Lawsonia intracellularis (strain PHE/MN1-00).